Reading from the N-terminus, the 499-residue chain is Glycerol kinase 2 (499 aa).

T13 contributes to the ADP binding site. The ATP site is built by T13, T14, and S15. T13 is a binding site for sn-glycerol 3-phosphate. Position 17 (R17) interacts with ADP. Sn-glycerol 3-phosphate-binding residues include R83, E84, Y134, and D241. R83, E84, Y134, D241, and Q242 together coordinate glycerol. 2 residues coordinate ADP: T263 and G306. T263, G306, Q310, and G407 together coordinate ATP. ADP is bound at residue G407.

Belongs to the FGGY kinase family.

The enzyme catalyses glycerol + ATP = sn-glycerol 3-phosphate + ADP + H(+). It participates in polyol metabolism; glycerol degradation via glycerol kinase pathway; sn-glycerol 3-phosphate from glycerol: step 1/1. Functionally, key enzyme in the regulation of glycerol uptake and metabolism. Catalyzes the phosphorylation of glycerol to yield sn-glycerol 3-phosphate. The polypeptide is Glycerol kinase 2 (Saccharolobus solfataricus (strain ATCC 35092 / DSM 1617 / JCM 11322 / P2) (Sulfolobus solfataricus)).